The primary structure comprises 377 residues: Mitogen-activated protein kinase HOG1 (377 aa).

A Protein kinase domain is found at 23–305; that stretch reads YTELNPVGMG…AVEGLTHPYM (283 aa). ATP contacts are provided by residues 29–37 and lysine 52; that span reads VGMGAFGLV. Aspartate 144 serves as the catalytic Proton acceptor. The residue at position 174 (threonine 174) is a Phosphothreonine. A TXY motif is present at residues 174–176; sequence TGY. Tyrosine 176 carries the post-translational modification Phosphotyrosine. Positions 354–377 are disordered; sequence NETEGSEQPDSQVEQNNLDSANGA. Positions 359-377 are enriched in polar residues; sequence SEQPDSQVEQNNLDSANGA.

This sequence belongs to the protein kinase superfamily. Ser/Thr protein kinase family. MAP kinase subfamily. HOG1 sub-subfamily. Mg(2+) is required as a cofactor. In terms of processing, dually phosphorylated on Thr-174 and Tyr-176, which activates the enzyme. Phosphorylated in response to oxidative and salt stress.

It is found in the cytoplasm. Its subcellular location is the nucleus. The catalysed reaction is L-seryl-[protein] + ATP = O-phospho-L-seryl-[protein] + ADP + H(+). It catalyses the reaction L-threonyl-[protein] + ATP = O-phospho-L-threonyl-[protein] + ADP + H(+). Activated by tyrosine and threonine phosphorylation. In terms of biological role, proline-directed serine/threonine-protein kinase involved in a signal transduction pathway that is activated by changes in the osmolarity of the extracellular environment. Controls osmotic regulation of transcription of target genes. Regulates stress-induced production and accumulation of glycerol and D-arabitol. HOG1 is also involved in virulence, morphogenesis and oxidative stress response especially through its role in chlamydospore formation, an oxygen-dependent morphogenetic program. In Candida albicans (strain SC5314 / ATCC MYA-2876) (Yeast), this protein is Mitogen-activated protein kinase HOG1 (HOG1).